The chain runs to 353 residues: uncharacterized protein (353 aa).

A signal peptide spans 1–20 (MLMRSVCFILLAVLLFSLSA). C21 is lipidated: N-palmitoyl cysteine. C21 carries S-diacylglycerol cysteine lipidation.

Its subcellular location is the cell membrane. This is an uncharacterized protein from Bacillus subtilis (strain 168).